Here is a 240-residue protein sequence, read N- to C-terminus: Tetraspanin-1 (240 aa).

Residues 1–9 (MQCFSFIKT) lie on the Cytoplasmic side of the membrane. A helical membrane pass occupies residues 10–30 (IMILFNLLIFLCGAALLAVGI). The Extracellular segment spans residues 31 to 52 (WVSIDGASFLKIFGPLSSSAMQ). A helical transmembrane segment spans residues 53-73 (FVNVGYFLIAAGAVVFALGFL). Over 74 to 88 (GCYGAQTESKCALMT) the chain is Cytoplasmic. Residues 89–109 (FFFILLLIFIAEVAAAVVALV) form a helical membrane-spanning segment. Residues 110–210 (YTTMAEHFLT…QQLLYDIRTN (101 aa)) are Extracellular-facing. Asn154 carries N-linked (GlcNAc...) asparagine glycosylation. A helical transmembrane segment spans residues 211–231 (AVTVGGVAAGIGGLELAAMIV). Topologically, residues 232 to 240 (SMYLYCNLQ) are cytoplasmic.

Belongs to the tetraspanin (TM4SF) family. Interacts with SLC19A2. Interacts with NTRK1/TRKA.

The protein resides in the lysosome membrane. Functionally, structural component of specialized membrane microdomains known as tetraspanin-enriched microdomains (TERMs), which act as platforms for receptor clustering and signaling. Participates thereby in diverse biological functions such as cell signal transduction, adhesion, migration and protein trafficking. Regulates neuronal differentiation in response to NGF by facilitating NGF-mediated activation of NTRK1/TRKA receptor tyrosine kinase and subsequent downstream signaling pathways. Plays a role in the inhibition of TNFalpha-induced apoptosis. Mechanistically, inhibits the NF-kappa-B signaling pathway by blocking phosphorylation of CHUK. Also promotes the stability of the thiamine transporter 1/SLC19A2 in intestinal epithelial cells leading to an increase of thiamine uptake process. This chain is Tetraspanin-1 (TSPAN1), found in Macaca fascicularis (Crab-eating macaque).